A 250-amino-acid chain; its full sequence is Triosephosphate isomerase (250 aa).

9 to 11 contributes to the substrate binding site; sequence NWK. H94 functions as the Electrophile in the catalytic mechanism. E166 functions as the Proton acceptor in the catalytic mechanism. Residues G172, S212, and 233–234 contribute to the substrate site; that span reads GG.

It belongs to the triosephosphate isomerase family. As to quaternary structure, homodimer.

The protein localises to the cytoplasm. The enzyme catalyses D-glyceraldehyde 3-phosphate = dihydroxyacetone phosphate. It functions in the pathway carbohydrate biosynthesis; gluconeogenesis. It participates in carbohydrate degradation; glycolysis; D-glyceraldehyde 3-phosphate from glycerone phosphate: step 1/1. Its function is as follows. Involved in the gluconeogenesis. Catalyzes stereospecifically the conversion of dihydroxyacetone phosphate (DHAP) to D-glyceraldehyde-3-phosphate (G3P). The chain is Triosephosphate isomerase from Clostridium novyi (strain NT).